A 505-amino-acid chain; its full sequence is Peroxisome proliferator-activated receptor gamma (505 aa).

Residue Thr84 is glycosylated (O-linked (GlcNAc) threonine). Ser112 bears the Phosphoserine; by MAPK mark. A DNA-binding region (nuclear receptor) is located at residues 136–210 (AIECRVCGDK…VGMSHNAIRF (75 aa)). 2 consecutive NR C4-type zinc fingers follow at residues 139–159 (CRVC…CEGC) and 176–198 (CDLN…FQKC). Residues 205–280 (HNAIRFGRMP…DKSPFVIYDM (76 aa)) form an interaction with FAM120B region. The 266-residue stretch at 238–503 (DLRALAKHLY…HPLLQEIYKD (266 aa)) folds into the NR LBD domain. Lys252 participates in a covalent cross-link: Glycyl lysine isopeptide (Lys-Gly) (interchain with G-Cter in ubiquitin). The 9aaTAD signature appears at 495-503 (PLLQEIYKD).

This sequence belongs to the nuclear hormone receptor family. NR1 subfamily. In terms of assembly, interacts with FOXO1 (acetylated form). Heterodimer with other nuclear receptors, such as RXRA. The heterodimer with the retinoic acid receptor RXRA is called adipocyte-specific transcription factor ARF6. Interacts with NCOA6 coactivator, leading to a strong increase in transcription of target genes. Interacts with coactivator PPARBP, leading to a mild increase in transcription of target genes. Interacts with NOCA7 in a ligand-inducible manner. Interacts with NCOA1 and NCOA2 LXXLL motifs. Interacts with ASXL1, ASXL2, DNTTIP2, FAM120B, MAP2K1/MEK1, NR0B2, PDPK1, PRDM16, PRMT2 and TGFB1I1. Interacts (when activated by agonist) with PPP5C. Interacts with HELZ2 and THRAP3; the interaction stimulates the transcriptional activity of PPARG. Interacts with PER2, the interaction is ligand dependent and blocks PPARG recruitment to target promoters. Interacts with NOCT. Interacts with ACTN4. Interacts (when in the liganded conformation) with GPS2. Interacts with CRY1 and CRY2 in a ligand-dependent manner. In the absence of hormonal ligand, interacts with TACC1. In macrophages, interacts with PAQR3 and STUB1; the interactions promote PPARG poylubiquitination and STUB1-mediated degradation. Post-translationally, O-GlcNAcylation at Thr-84 reduces transcriptional activity in adipocytes. In terms of processing, phosphorylated at basal conditions and dephosphorylated when treated with the ligand. May be dephosphorylated by PPP5C. The phosphorylated form may be inactive and dephosphorylation induces adipogenic activity. Ubiquitinated by E3 ubiquitin-protein ligase complex containing FBXO9; leading to proteasomal degradation. Ubiquitinated at Lys-252 by TRIM55 leading to proteasomal degradation. Ubiquitinated by E3 ubiquitin-protein ligase STUB1/CHIP; leading to proteasomal degradation. Highest expression in adipose tissue. Lower in liver, heart, kidney, stomach, duodenum and colon.

It localises to the nucleus. It is found in the cytoplasm. PDPK1 activates its transcriptional activity independently of its kinase activity. Functionally, nuclear receptor that binds peroxisome proliferators such as hypolipidemic drugs and fatty acids. Once activated by a ligand, the nuclear receptor binds to DNA specific PPAR response elements (PPRE) and modulates the transcription of its target genes, such as acyl-CoA oxidase. It therefore controls the peroxisomal beta-oxidation pathway of fatty acids. Key regulator of adipocyte differentiation and glucose homeostasis. ARF6 acts as a key regulator of the tissue-specific adipocyte P2 (aP2) enhancer. Acts as a critical regulator of gut homeostasis by suppressing NF-kappa-B-mediated pro-inflammatory responses. Plays a role in the regulation of cardiovascular circadian rhythms by regulating the transcription of BMAL1 in the blood vessels. The protein is Peroxisome proliferator-activated receptor gamma (PPARG) of Macaca mulatta (Rhesus macaque).